Consider the following 163-residue polypeptide: Nucleotide-binding protein SACE_6882 (163 aa).

The protein belongs to the YajQ family.

Its function is as follows. Nucleotide-binding protein. This chain is Nucleotide-binding protein SACE_6882, found in Saccharopolyspora erythraea (strain ATCC 11635 / DSM 40517 / JCM 4748 / NBRC 13426 / NCIMB 8594 / NRRL 2338).